Here is an 892-residue protein sequence, read N- to C-terminus: Alanine--tRNA ligase (892 aa).

The Zn(2+) site is built by histidine 596, histidine 600, cysteine 700, and histidine 704.

It belongs to the class-II aminoacyl-tRNA synthetase family. It depends on Zn(2+) as a cofactor.

It is found in the cytoplasm. It carries out the reaction tRNA(Ala) + L-alanine + ATP = L-alanyl-tRNA(Ala) + AMP + diphosphate. In terms of biological role, catalyzes the attachment of alanine to tRNA(Ala) in a two-step reaction: alanine is first activated by ATP to form Ala-AMP and then transferred to the acceptor end of tRNA(Ala). Also edits incorrectly charged Ser-tRNA(Ala) and Gly-tRNA(Ala) via its editing domain. In Methanococcus maripaludis (strain C6 / ATCC BAA-1332), this protein is Alanine--tRNA ligase.